The sequence spans 117 residues: Hemerythrin subunit beta (117 aa).

Fe cation contacts are provided by histidine 24, histidine 53, glutamate 57, histidine 72, histidine 76, histidine 105, and aspartate 110.

The protein belongs to the hemerythrin family. Octamer composed of two types of chains: alpha and beta.

Functionally, hemerythrin is a respiratory protein in blood cells of certain marine worms. The oxygen-binding site in each chain contains two iron atoms. This is Hemerythrin subunit beta from Lingula anatina (Brachiopod).